The sequence spans 564 residues: MNNSSELIAVINGFRNSGRFCDINIVINDERINAHKLILSGASEYFSILFSNNFIDSNEYEVNLSHLDYQSVNDLIDYIYGIPLSLTNDNVKYILSTADFLQIGSAITECENYILKNLCSKNCIDFYIYADKYNNKKIESASFNTILQNILRLINDENFKYLTEESMIKILSDDMLNIKNEDFAPLILIKWLESTQQSCTVELLKCLRISLLSPQVIKSLYSHRLVSSIYECITFLNNIAFLDESFPRYHSIELISIGISNSRDKISINCYNHKKNTWEMISSRRYRCSFAVAVLDNIIYMMGGYDQSPYRSSKVIAYNTCTNSWIYDIPELKYPRSNCGGLADDEYIYCIGGIRDQDSSLTSSIDKWKPSKPYWQKYAKMREPKCDMGVAMLNGLIYVIGGIVKGDTCTDALESLSEDGWMKHQRLPIKMSNMSTIVHDGKIYISGGYNNSSVVNVISNLVLSYNPIYDEWTKLSSLNIPRINPALWSAHNKLYVGGGISDDVRTNTSETYDKEKDCWTLDNGHVLPRNYIMYKCEPIKHKYPLEKTQYTNDFLKYLESFIGS.

Residues 21–88 form the BTB domain; sequence CDINIVINDE…IYGIPLSLTN (68 aa). 6 Kelch repeats span residues 252–297, 298–346, 347–395, 397–441, 442–492, and 494–539; these read IELI…VLDN, IIYM…ADDE, YIYC…MLNG, IYVI…VHDG, KIYI…SAHN, and LYVG…CEPI.

The protein belongs to the poxviruses Kelch family. In terms of assembly, interacts (via BTB domain) with host CUL3.

Its subcellular location is the host cytoplasm. Functionally, probable substrate-specific adapter of CUL3-containing E3 ubiquitin-protein ligases which mediate the ubiquitination and subsequent proteasomal degradation of host target proteins. This Homo sapiens (Human) protein is Kelch repeat and BTB domain-containing protein 1 (KBTB1).